The chain runs to 445 residues: Maltoporin (445 aa).

The signal sequence occupies residues 1-25 (MKMKAKWLPIAAGVTAALASQAAFA).

The protein belongs to the porin LamB (TC 1.B.3) family. As to quaternary structure, homotrimer formed of three 18-stranded antiparallel beta-barrels, containing three independent channels.

It localises to the cell outer membrane. The enzyme catalyses beta-maltose(in) = beta-maltose(out). Involved in the transport of maltose and maltodextrins. The protein is Maltoporin of Aeromonas salmonicida.